Reading from the N-terminus, the 131-residue chain is Large ribosomal subunit protein uL18 (131 aa).

The protein belongs to the universal ribosomal protein uL18 family. Part of the 50S ribosomal subunit; part of the 5S rRNA/L5/L18/L25 subcomplex. Contacts the 5S and 23S rRNAs.

Its function is as follows. This is one of the proteins that bind and probably mediate the attachment of the 5S RNA into the large ribosomal subunit, where it forms part of the central protuberance. This Corynebacterium kroppenstedtii (strain DSM 44385 / JCM 11950 / CIP 105744 / CCUG 35717) protein is Large ribosomal subunit protein uL18.